Here is a 279-residue protein sequence, read N- to C-terminus: Putative potassium channel regulatory protein (279 aa).

The BTB domain occupies 5-74 (ELVTLNVGGM…VRTSQLSLPS (70 aa)). Positions 256-279 (ENSRQENYETETVQVKQAKPNKKR) are disordered.

Its subcellular location is the endoplasmic reticulum. Functionally, inhibits potassium fluxes in cells, possibly by retaining potassium channels in the cytoplasm. The polypeptide is Putative potassium channel regulatory protein (kcnrg) (Xenopus tropicalis (Western clawed frog)).